Reading from the N-terminus, the 115-residue chain is Na(+)/H(+) antiporter subunit C1 (115 aa).

The next 3 helical transmembrane spans lie at 1–21 (MEIL…YLIL), 28–48 (IIIG…TMGG), and 72–92 (LILT…VLAF).

This sequence belongs to the CPA3 antiporters (TC 2.A.63) subunit C family. May form a heterooligomeric complex that consists of seven subunits: mnhA1, mnhB1, mnhC1, mnhD1, mnhE1, mnhF1 and mnhG1.

It is found in the cell membrane. Its function is as follows. Mnh complex is a Na(+)/H(+) antiporter involved in Na(+) excretion. The protein is Na(+)/H(+) antiporter subunit C1 (mnhC1) of Staphylococcus saprophyticus subsp. saprophyticus (strain ATCC 15305 / DSM 20229 / NCIMB 8711 / NCTC 7292 / S-41).